A 536-amino-acid polypeptide reads, in one-letter code: DEAD-box ATP-dependent RNA helicase 26 (536 aa).

Residues 1–44 (MMSGGPSDATHRKRRRRRGPKGSGVDGPSIPRAVTTNGAGPEEE) are disordered. Basic residues predominate over residues 11 to 20 (HRKRRRRRGP). Residues 74–102 (TRFDQCPVSPLSLKAIKDAGYEKMTQVQE) carry the Q motif motif. The Helicase ATP-binding domain maps to 105–282 (LPIILQGEDV…HIAMKRGYKF (178 aa)). 118 to 125 (AKTGTGKT) lines the ATP pocket. The DEAD box motif lies at 230-233 (DEAD). The region spanning 316–466 (VLKKHIAEDA…SIQTGVKDAL (151 aa)) is the Helicase C-terminal domain.

The protein belongs to the DEAD box helicase family.

It catalyses the reaction ATP + H2O = ADP + phosphate + H(+). This Oryza sativa subsp. japonica (Rice) protein is DEAD-box ATP-dependent RNA helicase 26.